The primary structure comprises 189 residues: Glycerol-3-phosphate acyltransferase (189 aa).

Transmembrane regions (helical) follow at residues 1-21 (MFWL…AILL), 51-71 (LAVL…LIAH), 77-97 (LQQQ…PLYF), 111-131 (MLLG…ALTF), and 151-171 (LLAW…LLIV).

Belongs to the PlsY family. Probably interacts with PlsX.

It localises to the cell inner membrane. It carries out the reaction an acyl phosphate + sn-glycerol 3-phosphate = a 1-acyl-sn-glycero-3-phosphate + phosphate. Its pathway is lipid metabolism; phospholipid metabolism. In terms of biological role, catalyzes the transfer of an acyl group from acyl-phosphate (acyl-PO(4)) to glycerol-3-phosphate (G3P) to form lysophosphatidic acid (LPA). This enzyme utilizes acyl-phosphate as fatty acyl donor, but not acyl-CoA or acyl-ACP. The sequence is that of Glycerol-3-phosphate acyltransferase from Pseudomonas fluorescens (strain ATCC BAA-477 / NRRL B-23932 / Pf-5).